Here is a 71-residue protein sequence, read N- to C-terminus: Large ribosomal subunit protein eL38 (71 aa).

Belongs to the eukaryotic ribosomal protein eL38 family.

This is Large ribosomal subunit protein eL38 (RpL38) from Ixodes scapularis (Black-legged tick).